A 378-amino-acid chain; its full sequence is 1-acyl-sn-glycerol-3-phosphate acyltransferase delta (378 aa).

Residues 11–31 (FLCHLVFCYVFIASGLIINTI) traverse the membrane as a helical segment. Residues 96–101 (HKFEID) carry the HXXXXD motif motif. 3 consecutive transmembrane segments (helical) span residues 125 to 145 (ELAYVPIIGWMWYFTEMVFCS), 307 to 327 (TLVNWLFWASLVLYPFFQFLV), and 338 to 358 (LASFILVFFVASVGVRWMIGV).

It belongs to the 1-acyl-sn-glycerol-3-phosphate acyltransferase family. In terms of tissue distribution, widely expressed with highest levels in skeletal muscle, followed by heart, liver, prostate and thymus.

It localises to the endoplasmic reticulum membrane. The catalysed reaction is a 1-acyl-sn-glycero-3-phosphate + an acyl-CoA = a 1,2-diacyl-sn-glycero-3-phosphate + CoA. It carries out the reaction (4Z,7Z,10Z,13Z,16Z,19Z)-docosahexaenoyl-CoA + 1-hexadecanoyl-sn-glycero-3-phosphate = 1-hexadecanoyl-2-(4Z,7Z,10Z,13Z,16Z,19Z-docosahexaenoyl)-sn-glycero-3-phosphate + CoA. The enzyme catalyses 1-octadecanoyl-sn-glycero-3-phosphate + (9Z,12Z)-octadecadienoyl-CoA = 1-octadecanoyl-2-(9Z,12Z-octadecadienoyl)-sn-glycero-3-phosphate + CoA. It catalyses the reaction 1-octadecanoyl-sn-glycero-3-phosphate + (4Z,7Z,10Z,13Z,16Z,19Z)-docosahexaenoyl-CoA = 1-octadecanoyl-2-(4Z,7Z,10Z,13Z,16Z,19Z-docosahexaenoyl)-sn-glycero-3-phosphate + CoA. The catalysed reaction is (4Z,7Z,10Z,13Z,16Z,19Z)-docosahexaenoyl-CoA + 1-(9Z-octadecenoyl)-sn-glycero-3-phosphate = 1-(9Z-octadecenoyl)-2-(4Z,7Z,10Z,13Z,16Z,19Z-docosahexaenoyl)-sn-glycero-3-phosphate + CoA. It participates in phospholipid metabolism; CDP-diacylglycerol biosynthesis; CDP-diacylglycerol from sn-glycerol 3-phosphate: step 2/3. Converts 1-acyl-sn-glycerol-3-phosphate (lysophosphatidic acid or LPA) into 1,2-diacyl-sn-glycerol-3-phosphate (phosphatidic acid or PA) by incorporating an acyl moiety at the sn-2 position of the glycerol backbone. Exhibits high acyl-CoA specificity for polyunsaturated fatty acyl-CoA, especially docosahexaenoyl-CoA (22:6-CoA, DHA-CoA). This chain is 1-acyl-sn-glycerol-3-phosphate acyltransferase delta (AGPAT4), found in Homo sapiens (Human).